The sequence spans 225 residues: 2-amino-5-formylamino-6-ribosylaminopyrimidin-4(3H)-one 5'-monophosphate deformylase (225 aa).

Glutamate 28, histidine 30, aspartate 39, and histidine 107 together coordinate Fe cation.

This sequence belongs to the creatininase superfamily. FAPy deformylase family. Homodimer. Requires Fe(2+) as cofactor. It depends on Zn(2+) as a cofactor.

It catalyses the reaction 2-amino-5-formylamino-6-(5-phospho-D-ribosylamino)pyrimidin-4(3H)-one + H2O = 2,5-diamino-6-(1-D-ribosylamino)pyrimidin-4(3H)-one 5'-phosphate + formate + H(+). The protein operates within cofactor biosynthesis; coenzyme F420 biosynthesis. Its pathway is cofactor biosynthesis; riboflavin biosynthesis. Its function is as follows. Catalyzes the hydrolysis of the formamide of 2-amino-5-formylamino-6-ribosylamino-4(3H)-pyrimidinone 5'-monophosphate (FAPy) to form 2,5-diamino-6-ribosylamino-4(3H)-pyrimidinone 5'-phosphate (APy). In Methanocaldococcus fervens (strain DSM 4213 / JCM 15782 / AG86) (Methanococcus fervens), this protein is 2-amino-5-formylamino-6-ribosylaminopyrimidin-4(3H)-one 5'-monophosphate deformylase.